Reading from the N-terminus, the 100-residue chain is Small ribosomal subunit protein uS14 (100 aa).

Belongs to the universal ribosomal protein uS14 family. Part of the 30S ribosomal subunit. Contacts proteins S3 and S10.

Its function is as follows. Binds 16S rRNA, required for the assembly of 30S particles and may also be responsible for determining the conformation of the 16S rRNA at the A site. This chain is Small ribosomal subunit protein uS14, found in Picosynechococcus sp. (strain ATCC 27264 / PCC 7002 / PR-6) (Agmenellum quadruplicatum).